Reading from the N-terminus, the 29-residue chain is TCLARDELCGASFLSNFLCCDGLCLLICV.

3 cysteine pairs are disulfide-bonded: C2–C20, C9–C24, and C19–C28.

In terms of tissue distribution, expressed by the venom duct.

Its subcellular location is the secreted. In terms of biological role, intraperitoneal injection into fish (1 nmol) provokes hyperactivity and erratic swimming in various directions after 14 minutes. The protein is Conotoxin pr6a of Conus parius (Cone snail).